Here is a 430-residue protein sequence, read N- to C-terminus: Probable folylpolyglutamate synthase (430 aa).

Position 37–40 (37–40 (GKET)) interacts with ATP. Glutamate 132 contributes to the Mg(2+) binding site. Aspartate 300 contributes to the ATP binding site.

This sequence belongs to the folylpolyglutamate synthase family.

The protein resides in the mitochondrion. It carries out the reaction (6S)-5,6,7,8-tetrahydrofolyl-(gamma-L-Glu)(n) + L-glutamate + ATP = (6S)-5,6,7,8-tetrahydrofolyl-(gamma-L-Glu)(n+1) + ADP + phosphate + H(+). It functions in the pathway cofactor biosynthesis; tetrahydrofolylpolyglutamate biosynthesis. Functionally, conversion of folates to polyglutamate derivatives. This Saccharomyces cerevisiae (strain ATCC 204508 / S288c) (Baker's yeast) protein is Probable folylpolyglutamate synthase (RMA1).